The following is a 354-amino-acid chain: Isocitrate dehydrogenase [NAD] regulatory subunit A, mitochondrial (354 aa).

The substrate site is built by S95, N97, R101, R111, and R132. 3 residues coordinate Mg(2+): D219, D243, and D247. NADP(+) contacts are provided by residues 276-282 (HGTAPDI) and N289.

The protein belongs to the isocitrate and isopropylmalate dehydrogenases family. As to quaternary structure, heterooligomer of catalytic and regulatory subunits. Mg(2+) serves as cofactor. Requires Mn(2+) as cofactor.

It is found in the mitochondrion. It catalyses the reaction D-threo-isocitrate + NAD(+) = 2-oxoglutarate + CO2 + NADH. Performs an essential role in the oxidative function of the citric acid cycle. The sequence is that of Isocitrate dehydrogenase [NAD] regulatory subunit A, mitochondrial (idhA) from Dictyostelium discoideum (Social amoeba).